The primary structure comprises 568 residues: PWWP domain-containing protein2 (568 aa).

Over residues 1–19 the composition is skewed to basic and acidic residues; that stretch reads MTEIKDSSVKDENPGKQEE. 3 disordered regions span residues 1–126, 213–340, and 465–568; these read MTEI…YKPG, QSTP…DVAK, and IASL…TGQK. Residues 29 to 46 show a composition bias toward polar residues; that stretch reads MSTATNNSKNIETTSSNG. Basic and acidic residues-rich tracts occupy residues 48–88 and 100–122; these read EDIK…KTIE and KSQKSEKSNGNARKETKQSERVN. A PWWP domain is found at 125 to 189; the sequence is PGMRVLTKMS…SDSLTPLTSE (65 aa). Residues 214–228 are compositionally biased toward low complexity; that stretch reads STPDLDSLSVPSSES. Positions 229-249 are enriched in acidic residues; it reads EVSEEESDQEMSEPSPIEEDY. The span at 255–266 shows a compositional bias: basic residues; sequence RRITRKGTKKKT. Polar residues predominate over residues 281 to 292; it reads LNASSNVSSNPA. Positions 325 to 336 are enriched in acidic residues; the sequence is KEEEEGSVANEE. 2 stretches are compositionally biased toward basic and acidic residues: residues 489–500 and 514–541; these read KQNEDNEDKVKA and DASKDMISEEKSSKDADNSLEVAGKDFA.

In Schizosaccharomyces pombe (strain 972 / ATCC 24843) (Fission yeast), this protein is PWWP domain-containing protein2 (pdp2).